The primary structure comprises 177 residues: ATP synthase subunit delta (177 aa).

The protein belongs to the ATPase delta chain family. F-type ATPases have 2 components, F(1) - the catalytic core - and F(0) - the membrane proton channel. F(1) has five subunits: alpha(3), beta(3), gamma(1), delta(1), epsilon(1). F(0) has three main subunits: a(1), b(2) and c(10-14). The alpha and beta chains form an alternating ring which encloses part of the gamma chain. F(1) is attached to F(0) by a central stalk formed by the gamma and epsilon chains, while a peripheral stalk is formed by the delta and b chains.

The protein localises to the cell inner membrane. Its function is as follows. F(1)F(0) ATP synthase produces ATP from ADP in the presence of a proton or sodium gradient. F-type ATPases consist of two structural domains, F(1) containing the extramembraneous catalytic core and F(0) containing the membrane proton channel, linked together by a central stalk and a peripheral stalk. During catalysis, ATP synthesis in the catalytic domain of F(1) is coupled via a rotary mechanism of the central stalk subunits to proton translocation. Functionally, this protein is part of the stalk that links CF(0) to CF(1). It either transmits conformational changes from CF(0) to CF(1) or is implicated in proton conduction. The chain is ATP synthase subunit delta from Haemophilus influenzae (strain PittGG).